The following is a 24-amino-acid chain: Sperm protamine P3 (24 aa).

The disordered stretch occupies residues 1–24 (RRRRRRRRHRRRRGRRGRRSRGRR).

Testis.

Its subcellular location is the nucleus. The protein localises to the chromosome. Its function is as follows. Protamines substitute for histones in the chromatin of sperm during the haploid phase of spermatogenesis. They compact sperm DNA into a highly condensed, stable and inactive complex. The chain is Sperm protamine P3 from Octopus vulgaris (Common octopus).